We begin with the raw amino-acid sequence, 364 residues long: Chorismate synthase (364 aa).

R48 lines the NADP(+) pocket. Residues 131–133 (RSS), 243–244 (NA), G288, 303–307 (KPTSS), and R329 contribute to the FMN site.

This sequence belongs to the chorismate synthase family. In terms of assembly, homotetramer. FMNH2 is required as a cofactor.

The catalysed reaction is 5-O-(1-carboxyvinyl)-3-phosphoshikimate = chorismate + phosphate. It participates in metabolic intermediate biosynthesis; chorismate biosynthesis; chorismate from D-erythrose 4-phosphate and phosphoenolpyruvate: step 7/7. In terms of biological role, catalyzes the anti-1,4-elimination of the C-3 phosphate and the C-6 proR hydrogen from 5-enolpyruvylshikimate-3-phosphate (EPSP) to yield chorismate, which is the branch point compound that serves as the starting substrate for the three terminal pathways of aromatic amino acid biosynthesis. This reaction introduces a second double bond into the aromatic ring system. The polypeptide is Chorismate synthase (Brucella melitensis biotype 2 (strain ATCC 23457)).